The following is a 1065-amino-acid chain: N-terminal acetyltransferase B complex auxiliary subunit NAA25 (1065 aa).

The stretch at 294 to 327 is one TPR repeat; it reads VDKLRIQGRLLARANDYSAAVDVYKKILELSPDD.

The protein belongs to the MDM20/NAA25 family. As to expression, ubiquitously expressed, with a higher expression in vascular bundles, hydathodes, leaf primordia and the base of the trichomes.

Its subcellular location is the cytoplasm. Its function is as follows. Auxiliary subunit of the NatB N-alpha-acetyltransferase complex. Required for flowering time regulation and for vegetative and reproductive plant development. The sequence is that of N-terminal acetyltransferase B complex auxiliary subunit NAA25 from Arabidopsis thaliana (Mouse-ear cress).